Consider the following 251-residue polypeptide: uncharacterized protein (251 aa).

Histidine 6, histidine 8, glutamate 90, histidine 130, histidine 154, and aspartate 202 together coordinate a divalent metal cation.

It belongs to the metallo-dependent hydrolases superfamily. TatD-type hydrolase family. A divalent metal cation is required as a cofactor.

This is an uncharacterized protein from Haemophilus influenzae (strain ATCC 51907 / DSM 11121 / KW20 / Rd).